We begin with the raw amino-acid sequence, 409 residues long: D-galactonate dehydratase family member Achl_0790 (409 aa).

Asp217 lines the Mg(2+) pocket. His219 lines the D-arabinonate pocket. 2 residues coordinate Mg(2+): Glu243 and Glu269. D-arabinonate-binding residues include Glu269, Arg290, His319, and Glu346.

The protein belongs to the mandelate racemase/muconate lactonizing enzyme family. GalD subfamily.

Functionally, has no detectable activity with D-mannonate and with a panel of 70 other acid sugars (in vitro), in spite of the conservation of the residues that are expected to be important for catalytic activity and cofactor binding. May have evolved a divergent function. This Pseudarthrobacter chlorophenolicus (strain ATCC 700700 / DSM 12829 / CIP 107037 / JCM 12360 / KCTC 9906 / NCIMB 13794 / A6) (Arthrobacter chlorophenolicus) protein is D-galactonate dehydratase family member Achl_0790.